Reading from the N-terminus, the 136-residue chain is Small ribosomal subunit protein uS19 (136 aa).

Belongs to the universal ribosomal protein uS19 family.

Protein S19 forms a complex with S13 that binds strongly to the 16S ribosomal RNA. This is Small ribosomal subunit protein uS19 from Methanothrix thermoacetophila (strain DSM 6194 / JCM 14653 / NBRC 101360 / PT) (Methanosaeta thermophila).